The primary structure comprises 197 residues: Isopentenyl-diphosphate Delta-isomerase (197 aa).

His-41 and His-48 together coordinate Mn(2+). Residues 46–183 (RLHRAFSVFL…AWFMTVLDAA (138 aa)) form the Nudix hydrolase domain. Cys-83 is an active-site residue. Cys-83 serves as a coordination point for Mg(2+). His-85 provides a ligand contact to Mn(2+). Glu-103 is a Mg(2+) binding site. Mn(2+) contacts are provided by Glu-130 and Glu-132. The active site involves Glu-132.

Belongs to the IPP isomerase type 1 family. Requires Mg(2+) as cofactor. It depends on Mn(2+) as a cofactor.

It is found in the cytoplasm. It carries out the reaction isopentenyl diphosphate = dimethylallyl diphosphate. It functions in the pathway isoprenoid biosynthesis; dimethylallyl diphosphate biosynthesis; dimethylallyl diphosphate from isopentenyl diphosphate: step 1/1. Functionally, catalyzes the 1,3-allylic rearrangement of the homoallylic substrate isopentenyl (IPP) to its highly electrophilic allylic isomer, dimethylallyl diphosphate (DMAPP). The sequence is that of Isopentenyl-diphosphate Delta-isomerase from Streptomyces coelicolor (strain ATCC BAA-471 / A3(2) / M145).